The sequence spans 348 residues: Probable dual-specificity RNA methyltransferase RlmN (348 aa).

Glu93 serves as the catalytic Proton acceptor. One can recognise a Radical SAM core domain in the interval 99–333 (TEKRLTACLS…VSFRKSRGLD (235 aa)). A disulfide bridge connects residues Cys106 and Cys338. Residues Cys113, Cys117, and Cys120 each coordinate [4Fe-4S] cluster. Residues 160–161 (GE), Ser190, 219–221 (SLH), and Asn295 contribute to the S-adenosyl-L-methionine site. Cys338 functions as the S-methylcysteine intermediate in the catalytic mechanism.

This sequence belongs to the radical SAM superfamily. RlmN family. [4Fe-4S] cluster is required as a cofactor.

Its subcellular location is the cytoplasm. It carries out the reaction adenosine(2503) in 23S rRNA + 2 reduced [2Fe-2S]-[ferredoxin] + 2 S-adenosyl-L-methionine = 2-methyladenosine(2503) in 23S rRNA + 5'-deoxyadenosine + L-methionine + 2 oxidized [2Fe-2S]-[ferredoxin] + S-adenosyl-L-homocysteine. The enzyme catalyses adenosine(37) in tRNA + 2 reduced [2Fe-2S]-[ferredoxin] + 2 S-adenosyl-L-methionine = 2-methyladenosine(37) in tRNA + 5'-deoxyadenosine + L-methionine + 2 oxidized [2Fe-2S]-[ferredoxin] + S-adenosyl-L-homocysteine. In terms of biological role, specifically methylates position 2 of adenine 2503 in 23S rRNA and position 2 of adenine 37 in tRNAs. The protein is Probable dual-specificity RNA methyltransferase RlmN of Prochlorococcus marinus (strain MIT 9312).